The primary structure comprises 670 residues: DNA ligase (670 aa).

NAD(+) contacts are provided by residues 34 to 38, 83 to 84, and glutamate 112; these read DAEYD and SL. The N6-AMP-lysine intermediate role is filled by lysine 114. Arginine 135, glutamate 169, lysine 285, and lysine 309 together coordinate NAD(+). Zn(2+)-binding residues include cysteine 403, cysteine 406, cysteine 421, and cysteine 426. A BRCT domain is found at 589–670; sequence PASSVLAGKT…FLQEISREEQ (82 aa).

The protein belongs to the NAD-dependent DNA ligase family. LigA subfamily. It depends on Mg(2+) as a cofactor. Requires Mn(2+) as cofactor.

The catalysed reaction is NAD(+) + (deoxyribonucleotide)n-3'-hydroxyl + 5'-phospho-(deoxyribonucleotide)m = (deoxyribonucleotide)n+m + AMP + beta-nicotinamide D-nucleotide.. DNA ligase that catalyzes the formation of phosphodiester linkages between 5'-phosphoryl and 3'-hydroxyl groups in double-stranded DNA using NAD as a coenzyme and as the energy source for the reaction. It is essential for DNA replication and repair of damaged DNA. This chain is DNA ligase, found in Geobacillus thermodenitrificans (strain NG80-2).